A 245-amino-acid polypeptide reads, in one-letter code: Protein canopy homolog 4 (245 aa).

An N-terminal signal peptide occupies residues 1-27; the sequence is MCGLRFIMGPVRLEILLFILAAYGAWA. 3 disulfides stabilise this stretch: cysteine 44–cysteine 202, cysteine 47–cysteine 190, and cysteine 100–cysteine 162. Positions 207 to 245 are disordered; the sequence is WTGKEKISDGQEEADDEEEEEEEEITKTSGNPKHDPEDL. Positions 209–237 form a coiled coil; sequence GKEKISDGQEEADDEEEEEEEEITKTSGN. A compositionally biased stretch (acidic residues) spans 216–230; the sequence is GQEEADDEEEEEEEE.

It belongs to the canopy family. In terms of assembly, interacts with TLR4. In terms of tissue distribution, highly expressed in lung, spleen, thymus, and uterus. Moderately expressed in kidney, stomach and placenta. Weakly expressed in brain, heart, liver, small intestine, skeletal muscle and testis.

Its subcellular location is the secreted. Functionally, plays a role in the regulation of the cell surface expression of TLR4. This Mus musculus (Mouse) protein is Protein canopy homolog 4 (Cnpy4).